The chain runs to 217 residues: Methylthioribulose-1-phosphate dehydratase (217 aa).

Residues H106 and H108 each coordinate Zn(2+).

This sequence belongs to the aldolase class II family. MtnB subfamily. Requires Zn(2+) as cofactor.

It catalyses the reaction 5-(methylsulfanyl)-D-ribulose 1-phosphate = 5-methylsulfanyl-2,3-dioxopentyl phosphate + H2O. It functions in the pathway amino-acid biosynthesis; L-methionine biosynthesis via salvage pathway; L-methionine from S-methyl-5-thio-alpha-D-ribose 1-phosphate: step 2/6. Catalyzes the dehydration of methylthioribulose-1-phosphate (MTRu-1-P) into 2,3-diketo-5-methylthiopentyl-1-phosphate (DK-MTP-1-P). The polypeptide is Methylthioribulose-1-phosphate dehydratase (Xanthomonas euvesicatoria pv. vesicatoria (strain 85-10) (Xanthomonas campestris pv. vesicatoria)).